A 62-amino-acid polypeptide reads, in one-letter code: Frontoxin III (62 aa).

Disulfide bonds link cysteine 3–cysteine 24, cysteine 17–cysteine 41, cysteine 43–cysteine 54, and cysteine 55–cysteine 60.

As to expression, expressed by the venom gland.

It is found in the secreted. Binds to muscle nicotinic acetylcholine receptor (nAChR) and inhibit acetylcholine from binding to the receptor, thereby impairing neuromuscular transmission. This chain is Frontoxin III, found in Micrurus frontalis (Coral snake).